A 327-amino-acid chain; its full sequence is tRNA N6-adenosine threonylcarbamoyltransferase (327 aa).

Residues His109 and His113 each contribute to the Fe cation site. Substrate is bound by residues 132–136, Asp165, Gly178, Asp182, and Asn268; that span reads MVSGG. Asp296 is a binding site for Fe cation.

This sequence belongs to the KAE1 / TsaD family. Fe(2+) serves as cofactor.

The protein resides in the cytoplasm. The enzyme catalyses L-threonylcarbamoyladenylate + adenosine(37) in tRNA = N(6)-L-threonylcarbamoyladenosine(37) in tRNA + AMP + H(+). Its function is as follows. Required for the formation of a threonylcarbamoyl group on adenosine at position 37 (t(6)A37) in tRNAs that read codons beginning with adenine. Is involved in the transfer of the threonylcarbamoyl moiety of threonylcarbamoyl-AMP (TC-AMP) to the N6 group of A37, together with TsaE and TsaB. TsaD likely plays a direct catalytic role in this reaction. This Thermotoga neapolitana (strain ATCC 49049 / DSM 4359 / NBRC 107923 / NS-E) protein is tRNA N6-adenosine threonylcarbamoyltransferase.